Here is a 300-residue protein sequence, read N- to C-terminus: Protoheme IX farnesyltransferase (300 aa).

The next 8 helical transmembrane spans lie at valine 24–valine 44, tryptophan 46–isoleucine 66, proline 94–phenylalanine 114, leucine 118–leucine 138, isoleucine 146–glycine 166, alanine 172–leucine 192, valine 224–leucine 244, and isoleucine 278–leucine 298.

The protein belongs to the UbiA prenyltransferase family. Protoheme IX farnesyltransferase subfamily.

It localises to the cell inner membrane. It carries out the reaction heme b + (2E,6E)-farnesyl diphosphate + H2O = Fe(II)-heme o + diphosphate. It functions in the pathway porphyrin-containing compound metabolism; heme O biosynthesis; heme O from protoheme: step 1/1. Converts heme B (protoheme IX) to heme O by substitution of the vinyl group on carbon 2 of heme B porphyrin ring with a hydroxyethyl farnesyl side group. This chain is Protoheme IX farnesyltransferase, found in Burkholderia ambifaria (strain MC40-6).